The primary structure comprises 302 residues: Recombination-associated protein RdgC (302 aa).

It belongs to the RdgC family.

It localises to the cytoplasm. Its subcellular location is the nucleoid. Functionally, may be involved in recombination. The sequence is that of Recombination-associated protein RdgC from Xylella fastidiosa (strain M12).